We begin with the raw amino-acid sequence, 134 residues long: UPF0412 protein YaaI (134 aa).

Positions 1 to 23 (MKSVFTLSASLAISLLLCCTAQA) are cleaved as a signal peptide.

It belongs to the UPF0412 family.

The protein is UPF0412 protein YaaI of Escherichia coli (strain SMS-3-5 / SECEC).